The primary structure comprises 428 residues: 3-phosphoshikimate 1-carboxyvinyltransferase (428 aa).

3-phosphoshikimate is bound by residues Lys-21, Ser-22, and Arg-26. Residue Lys-21 participates in phosphoenolpyruvate binding. Phosphoenolpyruvate-binding residues include Gly-91 and Arg-119. 3-phosphoshikimate is bound by residues Ser-164, Gln-166, Asp-313, and Lys-340. Gln-166 contributes to the phosphoenolpyruvate binding site. Asp-313 functions as the Proton acceptor in the catalytic mechanism. Phosphoenolpyruvate-binding residues include Arg-344 and Arg-386.

Belongs to the EPSP synthase family. Monomer.

Its subcellular location is the cytoplasm. It catalyses the reaction 3-phosphoshikimate + phosphoenolpyruvate = 5-O-(1-carboxyvinyl)-3-phosphoshikimate + phosphate. It functions in the pathway metabolic intermediate biosynthesis; chorismate biosynthesis; chorismate from D-erythrose 4-phosphate and phosphoenolpyruvate: step 6/7. Functionally, catalyzes the transfer of the enolpyruvyl moiety of phosphoenolpyruvate (PEP) to the 5-hydroxyl of shikimate-3-phosphate (S3P) to produce enolpyruvyl shikimate-3-phosphate and inorganic phosphate. The chain is 3-phosphoshikimate 1-carboxyvinyltransferase from Campylobacter jejuni subsp. jejuni serotype O:2 (strain ATCC 700819 / NCTC 11168).